Reading from the N-terminus, the 98-residue chain is NADH-ubiquinone oxidoreductase chain 4L (98 aa).

The next 3 helical transmembrane spans lie at 1 to 21 (MPII…GMLF), 29 to 49 (SLLC…LMAL), and 58 to 78 (IVPI…LALL).

It belongs to the complex I subunit 4L family. As to quaternary structure, core subunit of respiratory chain NADH dehydrogenase (Complex I) which is composed of 45 different subunits.

Its subcellular location is the mitochondrion inner membrane. The catalysed reaction is a ubiquinone + NADH + 5 H(+)(in) = a ubiquinol + NAD(+) + 4 H(+)(out). Core subunit of the mitochondrial membrane respiratory chain NADH dehydrogenase (Complex I) which catalyzes electron transfer from NADH through the respiratory chain, using ubiquinone as an electron acceptor. Part of the enzyme membrane arm which is embedded in the lipid bilayer and involved in proton translocation. The polypeptide is NADH-ubiquinone oxidoreductase chain 4L (MT-ND4L) (Trachypithecus obscurus (Dusky leaf-monkey)).